Here is a 508-residue protein sequence, read N- to C-terminus: UTP--glucose-1-phosphate uridylyltransferase (508 aa).

Blocked amino end (Ser) is present on serine 2. At serine 13 the chain carries Phosphoserine. Residues 113-116 (LNGG), lysine 127, glutamine 190, and glycine 222 contribute to the UTP site. 115–116 (GG) is a substrate binding site. Mg(2+) is bound at residue lysine 127. Substrate-binding positions include histidine 223 and 251–253 (NID). Aspartate 253 and lysine 396 together coordinate UTP. A Mg(2+)-binding site is contributed by aspartate 253. The active site involves lysine 396. At threonine 426 the chain carries Phosphothreonine. A Phosphoserine modification is found at serine 434. Residue lysine 438 is modified to N6-acetyllysine. A phosphoserine mark is found at serine 448 and serine 461. The segment at 457–508 (HLTVSGDVTFGKNVSLKGTVIIIANHGDRIDIPPGAVLENKIVSGNLRILDH) is oligomerization. Positions 502 to 503 (NL) are critical for end-to-end subunit interaction.

It belongs to the UDPGP type 1 family. Homooctamer.

It is found in the cytoplasm. It carries out the reaction alpha-D-glucose 1-phosphate + UTP + H(+) = UDP-alpha-D-glucose + diphosphate. The protein operates within glycan biosynthesis; glycogen biosynthesis. In terms of biological role, UTP--glucose-1-phosphate uridylyltransferase catalyzing the conversion of glucose-1-phosphate into UDP-glucose, a crucial precursor for the production of glycogen. The protein is UTP--glucose-1-phosphate uridylyltransferase (UGP2) of Bos taurus (Bovine).